A 349-amino-acid polypeptide reads, in one-letter code: Dipeptide transport ATP-binding protein DppD (349 aa).

Positions 7-258 (LEVKNLHVNF…PQHPYTWGLL (252 aa)) constitute an ABC transporter domain. 43–50 (GESGSGKS) contributes to the ATP binding site.

Belongs to the ABC transporter superfamily. As to quaternary structure, the complex is composed of two ATP-binding proteins (DppD and DppF), two transmembrane proteins (DppB and DppC) and a solute-binding protein (DppA).

Its subcellular location is the cell membrane. It carries out the reaction a dipeptide(out) + ATP + H2O = a dipeptide(in) + ADP + phosphate + H(+). Part of the ABC transporter DppABCDF involved in dipeptide transport. Responsible for energy coupling to the transport system. The polypeptide is Dipeptide transport ATP-binding protein DppD (Lactococcus lactis subsp. cremoris (strain MG1363)).